Reading from the N-terminus, the 623-residue chain is Transketolase (623 aa).

M1 carries the N-acetylmethionine modification. N6-acetyllysine is present on residues K6 and K11. H37 is a binding site for substrate. The thiamine diphosphate site is built by S40 and H77. Residue S104 is modified to Phosphoserine. G123–L125 is a binding site for thiamine diphosphate. N6-acetyllysine is present on K144. D155 contributes to the Mg(2+) binding site. The thiamine diphosphate site is built by G156 and N185. Mg(2+)-binding residues include N185 and L187. Residues K204, K232, and K241 each carry the N6-acetyllysine modification. Positions 244 and 258 each coordinate thiamine diphosphate. A substrate-binding site is contributed by H258. K260 is modified (N6-acetyllysine). The residue at position 275 (Y275) is a Phosphotyrosine. Residue T287 is modified to Phosphothreonine. S295 is modified (phosphoserine). Residues R318 and S345 each coordinate substrate. A Phosphoserine modification is found at S345. K352 is covalently cross-linked (Glycyl lysine isopeptide (Lys-Gly) (interchain with G-Cter in SUMO2)). E366 serves as the catalytic Proton donor. F392 contacts thiamine diphosphate. Residues H416 and D424 each coordinate substrate. Position 428 (Q428) interacts with thiamine diphosphate. R474 is a binding site for substrate. An N6-acetyllysine mark is found at K538 and K603.

Belongs to the transketolase family. As to quaternary structure, homodimer. Mg(2+) is required as a cofactor. Requires Ca(2+) as cofactor. The cofactor is Mn(2+). It depends on Co(2+) as a cofactor. Thiamine diphosphate serves as cofactor.

It carries out the reaction D-sedoheptulose 7-phosphate + D-glyceraldehyde 3-phosphate = aldehydo-D-ribose 5-phosphate + D-xylulose 5-phosphate. In terms of biological role, catalyzes the transfer of a two-carbon ketol group from a ketose donor to an aldose acceptor, via a covalent intermediate with the cofactor thiamine pyrophosphate. This Mus musculus (Mouse) protein is Transketolase (Tkt).